The primary structure comprises 583 residues: Immunity-related GTPase family Q protein (583 aa).

C152 and C158 are oxidised to a cystine. The stretch at 155–179 forms a coiled coil; that stretch reads SDRCEELERLQVVLRTQAEALQRLL. An LIR 1 motif is present at residues 186-189; that stretch reads FEVL. A Phosphothreonine modification is found at T203. Residues 223-409 enclose the IRG-type G domain; sequence ARLDLAVAGT…PGLGTWLQHA (187 aa). The interval 322–373 is disordered; the sequence is APLVGVRTDGQGEDPPEVLEEEKAQNASDGNSGDARSEGKKAGIGDSGCTAA. Positions 332 to 341 are enriched in acidic residues; it reads QGEDPPEVLE. Residues 381–384 carry the LIR 2 motif; that stretch reads WEVL.

The protein belongs to the TRAFAC class dynamin-like GTPase superfamily. IRG family. In terms of assembly, interacts (via LIR motif 1) with GABARAPL2. Interacts (via LIR motif 2) with MAP1LC3B/LC3B.

It is found in the lysosome. The protein localises to the cytoplasmic vesicle. The protein resides in the autophagosome. Autophagy receptor that specifically promotes clearance of misfolded MHC class I molecules by targeting them to the lysosome for degradation. Acts as a molecular adapter that specifically recognizes and binds (1) misfolded MHC class I molecules following their ubiquitination, as well as (2) autophagy-related proteins, promoting the recruitment of misfolded MHC class I molecules to autophagy machinery for degradation. Degradation of misfolded MHC class I molecules is essential to prevent accumulation of defective MHC class I complexes at the surface of CD8(+) T-cells and prevent a stronger T-cell-mediated response. In contrast to other members of the family, does not show GTPase activity. The chain is Immunity-related GTPase family Q protein (Irgq) from Mus musculus (Mouse).